Reading from the N-terminus, the 310-residue chain is NADH-cytochrome b5 reductase 1 (310 aa).

Residues 32 to 52 form a helical membrane-spanning segment; it reads EWLPYAVALAAILSGGKVFSN. An FAD-binding FR-type domain is found at 61–166; the sequence is TEFQNFELKE…RGPKGAMVYT (106 aa). FAD is bound by residues 146-161 and 172-209; these read AGLR…GPKG and KIGM…QVDL.

This sequence belongs to the flavoprotein pyridine nucleotide cytochrome reductase family. Monomer. Component of the 2-(3-amino-3-carboxypropyl)histidine synthase complex composed of DPH1, DPH2, DPH3 and a NADH-dependent reductase, predominantly CBR1. FAD is required as a cofactor.

It is found in the mitochondrion outer membrane. The enzyme catalyses 2 Fe(III)-[cytochrome b5] + NADH = 2 Fe(II)-[cytochrome b5] + NAD(+) + H(+). It catalyses the reaction 2 Fe(3+)-[Dph3] + NADH = 2 Fe(2+)-[Dph3] + NAD(+) + H(+). It participates in protein modification; peptidyl-diphthamide biosynthesis. Its function is as follows. NADH-dependent reductase for DPH3 and cytochrome b5. Required for the first step of diphthamide biosynthesis, a post-translational modification of histidine which occurs in elongation factor 2. DPH1 and DPH2 transfer a 3-amino-3-carboxypropyl (ACP) group from S-adenosyl-L-methionine (SAM) to a histidine residue, the reaction is assisted by a reduction system comprising DPH3 and a NADH-dependent reductase, predominantly CBR1. By reducing DPH3, also involved in the formation of the tRNA wobble base modification mcm5s 2U (5-methoxycarbonylmethyl-2-thiouridine), mediated by the elongator complex. The cytochrome b5/NADH cytochrome b5 reductase electron transfer system supports the catalytic activity of several sterol biosynthetic enzymes. This chain is NADH-cytochrome b5 reductase 1 (CBR1), found in Ajellomyces capsulatus (strain NAm1 / WU24) (Darling's disease fungus).